The following is a 453-amino-acid chain: Ribulose bisphosphate carboxylase large chain (453 aa).

The propeptide occupies 1–2 (MS). Pro3 carries the post-translational modification N-acetylproline. Lys14 carries the N6,N6,N6-trimethyllysine modification. Substrate is bound by residues Asn123 and Thr173. Residue Lys175 is the Proton acceptor of the active site. A substrate-binding site is contributed by Lys177. Residues Lys201, Asp203, and Glu204 each contribute to the Mg(2+) site. The residue at position 201 (Lys201) is an N6-carboxylysine. His294 functions as the Proton acceptor in the catalytic mechanism. Arg295, His327, and Ser379 together coordinate substrate.

The protein belongs to the RuBisCO large chain family. Type I subfamily. In terms of assembly, heterohexadecamer of 8 large chains and 8 small chains; disulfide-linked. The disulfide link is formed within the large subunit homodimers. Mg(2+) is required as a cofactor. In terms of processing, the disulfide bond which can form in the large chain dimeric partners within the hexadecamer appears to be associated with oxidative stress and protein turnover.

The protein localises to the plastid. The protein resides in the chloroplast. The enzyme catalyses 2 (2R)-3-phosphoglycerate + 2 H(+) = D-ribulose 1,5-bisphosphate + CO2 + H2O. The catalysed reaction is D-ribulose 1,5-bisphosphate + O2 = 2-phosphoglycolate + (2R)-3-phosphoglycerate + 2 H(+). Functionally, ruBisCO catalyzes two reactions: the carboxylation of D-ribulose 1,5-bisphosphate, the primary event in carbon dioxide fixation, as well as the oxidative fragmentation of the pentose substrate in the photorespiration process. Both reactions occur simultaneously and in competition at the same active site. The sequence is that of Ribulose bisphosphate carboxylase large chain from Sherardia arvensis (Blue field-madder).